The following is a 148-amino-acid chain: Large ribosomal subunit protein bL9 (148 aa).

It belongs to the bacterial ribosomal protein bL9 family.

Its function is as follows. Binds to the 23S rRNA. This chain is Large ribosomal subunit protein bL9, found in Acidithiobacillus ferrooxidans (strain ATCC 23270 / DSM 14882 / CIP 104768 / NCIMB 8455) (Ferrobacillus ferrooxidans (strain ATCC 23270)).